Consider the following 512-residue polypeptide: ATP synthase subunit alpha (512 aa).

Position 169–176 (169–176) interacts with ATP; the sequence is GDRQTGKT.

The protein belongs to the ATPase alpha/beta chains family. In terms of assembly, F-type ATPases have 2 components, CF(1) - the catalytic core - and CF(0) - the membrane proton channel. CF(1) has five subunits: alpha(3), beta(3), gamma(1), delta(1), epsilon(1). CF(0) has three main subunits: a(1), b(2) and c(9-12). The alpha and beta chains form an alternating ring which encloses part of the gamma chain. CF(1) is attached to CF(0) by a central stalk formed by the gamma and epsilon chains, while a peripheral stalk is formed by the delta and b chains.

It is found in the cell membrane. It catalyses the reaction ATP + H2O + 4 H(+)(in) = ADP + phosphate + 5 H(+)(out). Produces ATP from ADP in the presence of a proton gradient across the membrane. The alpha chain is a regulatory subunit. The protein is ATP synthase subunit alpha of Buchnera aphidicola subsp. Acyrthosiphon pisum (strain Tuc7).